The sequence spans 391 residues: 3-ketoacyl-CoA thiolase (391 aa).

Residue cysteine 95 is the Acyl-thioester intermediate of the active site. Active-site proton acceptor residues include histidine 347 and cysteine 377.

The protein belongs to the thiolase-like superfamily. Thiolase family. As to quaternary structure, heterotetramer of two alpha chains (FadB) and two beta chains (FadA).

Its subcellular location is the cytoplasm. The catalysed reaction is an acyl-CoA + acetyl-CoA = a 3-oxoacyl-CoA + CoA. The protein operates within lipid metabolism; fatty acid beta-oxidation. In terms of biological role, catalyzes the final step of fatty acid oxidation in which acetyl-CoA is released and the CoA ester of a fatty acid two carbons shorter is formed. This is 3-ketoacyl-CoA thiolase from Stutzerimonas stutzeri (strain A1501) (Pseudomonas stutzeri).